The following is a 128-amino-acid chain: DNA polymerase epsilon subunit 3 (128 aa).

Residues 98-110 (EKKESKASKKDSN) are compositionally biased toward basic and acidic residues. A disordered region spans residues 98-128 (EKKESKASKKDSNTAENANASATATAEEAPE). Residues 111 to 128 (TAENANASATATAEEAPE) are compositionally biased toward low complexity.

As to quaternary structure, homodimer. Component of the DNA polymerase epsilon complex consisting of four subunits: the catalytic subunit PolE1/DNApol-epsilon255 and the accessory subunits PolE2/DNApol-epsilon58, Chrac-14/DNApolE3 and PolE4. Component of the chromatin accessibility complex (CHRAC), composed of Chrac-14, Chrac-16, Acf and Iswi. Forms an heterodimer with Chrac-16. The Chrac-14/Chrac-16 heterodimer interacts with Acf (via N-terminus). Interacts directly with Iswi and this interaction is further stabilized by association with Chrac-16. Component of the Ada2a-containing (ATAC) complex composed of at least Ada2a, Atac1, Hcf, Ada3, Gcn5, Mocs2B, Charac-14, Atac3, Atac2, NC2beta and wds. Interacts with cid.

It is found in the nucleus. Functionally, accessory component of the DNA polymerase epsilon complex. Participates in DNA repair and in chromosomal DNA replication. Histone-like protein which promotes nucleosome sliding of ATP-dependent nucleosome remodeling complexes. Part of the chromatin-accessibility complex (CHRAC) which uses energy/ATP to increase the general accessibility of DNA in chromatin. As a heterodimer with Chrac-16, binds DNA and facilitates nucleosome sliding by Acf. Has a role in DNA damage response by preventing cid mislocalization to chromatin. This chain is DNA polymerase epsilon subunit 3, found in Drosophila melanogaster (Fruit fly).